Here is a 138-residue protein sequence, read N- to C-terminus: Basic phospholipase A2 Cvv-N6 (138 aa).

The signal sequence occupies residues 1–16 (MRTFWIVALLLVGVEG). 7 disulfides stabilise this stretch: Cys42–Cys131, Cys44–Cys60, Cys59–Cys111, Cys65–Cys138, Cys66–Cys104, Cys73–Cys97, and Cys91–Cys102. 3 residues coordinate Ca(2+): Tyr43, Gly45, and Gly47. Residue His63 is part of the active site. Asp64 provides a ligand contact to Ca(2+). Asp105 is an active-site residue.

The protein belongs to the phospholipase A2 family. Group II subfamily. D49 sub-subfamily. In terms of assembly, monomer. Binds to calmodulin. Ca(2+) is required as a cofactor. Expressed by the venom gland.

The protein resides in the secreted. The catalysed reaction is a 1,2-diacyl-sn-glycero-3-phosphocholine + H2O = a 1-acyl-sn-glycero-3-phosphocholine + a fatty acid + H(+). Its activity is regulated as follows. Heparin and wedelolactone inhibit the myotoxic activity. The PLA2 inhibitor, para-bromophenacyl bromide (BPB), inhibits enzymatic and myotoxic activities. In terms of biological role, snake venom phospholipase A2 (PLA2) that is myotoxic and displays moderate edema-inducing activity in rat paws. Does not show neurotoxic activity. PLA2 catalyzes the calcium-dependent hydrolysis of the 2-acyl groups in 3-sn-phosphoglycerides. The polypeptide is Basic phospholipase A2 Cvv-N6 (Crotalus viridis viridis (Prairie rattlesnake)).